The primary structure comprises 720 residues: Serine/threonine-protein kinase KIN82 (720 aa).

2 stretches are compositionally biased toward polar residues: residues 1–13 (MTQQ…SQRL) and 99–116 (FNHN…STSE). 2 disordered regions span residues 1–20 (MTQQ…RSMS) and 99–128 (FNHN…RSTI). Ser-203 is modified (phosphoserine). A compositionally biased stretch (low complexity) spans 230 to 241 (SPLANLSLSNSP). The segment at 230–257 (SPLANLSLSNSPIDSPRKNSETRKDQIP) is disordered. Over residues 244-255 (SPRKNSETRKDQ) the composition is skewed to basic and acidic residues. One can recognise a Protein kinase domain in the interval 324 to 602 (FEKIRLLGQG…AADIKRHPFF (279 aa)). ATP is bound by residues 330–338 (LGQGDVGKV) and Lys-353. The Proton acceptor role is filled by Asp-449.

It belongs to the protein kinase superfamily. Ser/Thr protein kinase family. KIN82 subfamily.

The enzyme catalyses L-seryl-[protein] + ATP = O-phospho-L-seryl-[protein] + ADP + H(+). The catalysed reaction is L-threonyl-[protein] + ATP = O-phospho-L-threonyl-[protein] + ADP + H(+). Functionally, flippase activator that phosphorylates DFN1 and DFN2 and which is involved in the generation of phospholipid asymmetry in membranes by the inward translocation of phospholipids. This chain is Serine/threonine-protein kinase KIN82 (KIN82), found in Saccharomyces cerevisiae (strain ATCC 204508 / S288c) (Baker's yeast).